An 864-amino-acid polypeptide reads, in one-letter code: DNA mismatch repair protein MutS (864 aa).

Position 607–614 (607–614) interacts with ATP; the sequence is GPNMGGKS.

Belongs to the DNA mismatch repair MutS family.

In terms of biological role, this protein is involved in the repair of mismatches in DNA. It is possible that it carries out the mismatch recognition step. This protein has a weak ATPase activity. The sequence is that of DNA mismatch repair protein MutS from Neisseria gonorrhoeae (strain ATCC 700825 / FA 1090).